The primary structure comprises 428 residues: Putative POM121-like protein 1 (428 aa).

Disordered regions lie at residues 1–23 (MDSL…RLSP), 36–204 (KESG…KFPL), 254–293 (DCRP…HKSQ), 306–384 (TEVP…PSTL), and 402–428 (GPQP…SCPK). Residues 44–62 (EQDKDPRVQENPGDQRRVP) are compositionally biased toward basic and acidic residues. A compositionally biased stretch (low complexity) spans 106–117 (QTSQTSWTSSCT). Polar residues-rich tracts occupy residues 118–129 (NRNAISSSYSST), 144–155 (SHCQLTLSSSKT), 260–269 (PSHTLSSLAT), 326–347 (FSSS…QVTS), and 403–415 (PQPQ…RGQN). Residues 416-428 (QRSQTSRTSSCPK) show a composition bias toward low complexity.

Belongs to the POM121 family.

The sequence is that of Putative POM121-like protein 1 (POM121L1P) from Homo sapiens (Human).